We begin with the raw amino-acid sequence, 329 residues long: Malate dehydrogenase (329 aa).

Residue 12-18 coordinates NAD(+); the sequence is GAAGQIG. Substrate contacts are provided by R93 and R99. Residues N106, Q113, and 130-132 each bind NAD(+); that span reads VGN. The substrate site is built by N132 and R163. H188 acts as the Proton acceptor in catalysis.

It belongs to the LDH/MDH superfamily. MDH type 2 family.

The enzyme catalyses (S)-malate + NAD(+) = oxaloacetate + NADH + H(+). In terms of biological role, catalyzes the reversible oxidation of malate to oxaloacetate. This chain is Malate dehydrogenase, found in Frankia casuarinae (strain DSM 45818 / CECT 9043 / HFP020203 / CcI3).